Here is a 445-residue protein sequence, read N- to C-terminus: Tubby-like F-box protein 8 (445 aa).

The region spanning Glu-56–Lys-102 is the F-box domain.

Belongs to the TUB family. As to expression, ubiquitous.

The protein is Tubby-like F-box protein 8 (TULP8) of Oryza sativa subsp. japonica (Rice).